The primary structure comprises 226 residues: 1-hydroxy-2-glutathionyl-2-methyl-3-butene dehydrogenase (226 aa).

This sequence belongs to the short-chain dehydrogenases/reductases (SDR) family.

It catalyses the reaction 2-glutathionyl-2-methylbut-3-en-1-ol + 2 NAD(+) + H2O = 2-glutathionyl-2-methylbut-3-enoate + 2 NADH + 3 H(+). The enzyme catalyses 2-glutathionyl-2-methylbut-3-en-1-ol + NAD(+) = 2-glutathionyl-2-methylbut-3-enal + NADH + H(+). It carries out the reaction 2-glutathionyl-2-methylbut-3-enal + NAD(+) + H2O = 2-glutathionyl-2-methylbut-3-enoate + NADH + 2 H(+). Involved in isoprene degradation. Catalyzes the two-step NAD(+)-dependent oxidation of 2-glutathionyl-2-methylbut-3-en-1-ol (HGMB) to 2-glutathionyl-2-methylbut-3-enoate (GMBA). This is 1-hydroxy-2-glutathionyl-2-methyl-3-butene dehydrogenase from Rhodococcus sp. (strain AD45).